The chain runs to 749 residues: Protein SWAP (749 aa).

The dry CEEERYL stretch occupies residues 8 to 124 (SNVHVQEYKD…RNDQRNAIGF (117 aa)). Residues 105–118 (EQEKEEEEKRRNDQ) are compositionally biased toward basic and acidic residues. Residues 105–149 (EQEKEEEEKRRNDQRNAIGFDYGTGKVKARESDSEDEPFEPPEGI) are disordered. An SURP motif 1 repeat occupies 166–209 (IIEKTASFIVANGTQMEIVIKAKQRNNAEQFGFLEFDHRLNPFY). The disordered stretch occupies residues 256–310 (HGSDSEDSDSDYELHPSLLSGGAKRPVTPEKPGAIGPRKKPVEPEKPPDFTLKPV). The stretch at 391-431 (ILNSYAEHVAQRGLEAEASLAAREDLQLHFMEPKSPYYSYY) is one SURP motif 2 repeat. The span at 458-478 (PAPPSAVSSPGPSSLMSLNLS) shows a compositional bias: low complexity. Disordered regions lie at residues 458–498 (PAPP…SSRL), 537–592 (LRND…QVDR), and 608–749 (KAKK…DRRR). A compositionally biased stretch (basic and acidic residues) spans 538–552 (RNDEPRDESSFRFDP). The span at 560–569 (PSDTTANFSD) shows a compositional bias: polar residues. Residues 574–583 (FPPPTPPVIP) show a composition bias toward pro residues. Composition is skewed to basic and acidic residues over residues 608–659 (KAKK…RSLD) and 679–689 (EEMKRTDEDRE). 2 stretches are compositionally biased toward basic residues: residues 690 to 704 (RKRHRKRSRSRRRSR) and 714 to 749 (EHKKSRKSGRHHRSRSRSSSRDRHRRNRSRSRDRRR).

It is a regulator of pre-mRNA splicing (and, possibly, of other RNA processing events). It may regulate its own expression at the level of RNA processing. The protein is Protein SWAP (swp-1) of Caenorhabditis elegans.